A 199-amino-acid polypeptide reads, in one-letter code: Thymidine kinase (199 aa).

Residues 9–16 and 93–96 each bind ATP; these read GAMSSGKS and DEAQ. Catalysis depends on Glu-94, which acts as the Proton acceptor. Zn(2+) contacts are provided by Cys-151, Cys-154, Cys-188, and His-191.

This sequence belongs to the thymidine kinase family. Homotetramer.

Its subcellular location is the cytoplasm. The catalysed reaction is thymidine + ATP = dTMP + ADP + H(+). The sequence is that of Thymidine kinase from Lactobacillus johnsonii (strain CNCM I-12250 / La1 / NCC 533).